The chain runs to 395 residues: RNA demethylase ALKBH5 (395 aa).

2 disordered regions span residues 1–28 and 47–83; these read MAAA…AGSR and AAEP…EEEA. Ala-2 is subject to N-acetylalanine. Residue Lys-58 forms a Glycyl lysine isopeptide (Lys-Gly) (interchain with G-Cter in ubiquitin) linkage. Basic and acidic residues predominate over residues 60 to 83; sequence KYQEDSDPERSDYEEHQLQKEEEA. Phosphoserine occurs at positions 65 and 70. Positions 68 to 117 form a coiled coil; the sequence is ERSDYEEHQLQKEEEARKVKSGIRQIRLFSQDECSKIEARIDEVVSRAEK. Tyr-72 carries the phosphotyrosine modification. Residue Lys-87 forms a Glycyl lysine isopeptide (Lys-Gly) (interchain with G-Cter in SUMO1) linkage. Position 88 is a phosphoserine (Ser-88). Lys-133 bears the N6-acetyllysine mark. Tyr-140 is a catalytic residue. The 2-oxoglutarate site is built by Asn-194, Tyr-196, and His-205. Cys-231 and Cys-268 are disulfide-bonded. Lys-236 bears the N6-acetyllysine mark. The 2-oxoglutarate site is built by His-267 and Arg-278. The disordered stretch occupies residues 294 to 395; it reads ETKSLSSSTL…PTRKVKMRRH (102 aa). The segment covering 296 to 306 has biased composition (low complexity); the sequence is KSLSSSTLPPS. A Glycyl lysine isopeptide (Lys-Gly) (interchain with G-Cter in SUMO1) cross-link involves residue Lys-322. Position 326 is a phosphoserine (Ser-326). A Glycyl lysine isopeptide (Lys-Gly) (interchain with G-Cter in SUMO2) cross-link involves residue Lys-329. Positions 329–350 are enriched in basic and acidic residues; that stretch reads KADPDAAHRPRILEMDKEENRR. Arg-360 carries the post-translational modification Omega-N-methylarginine. Residues Ser-362, Ser-372, Ser-375, and Ser-385 each carry the phosphoserine modification.

The protein belongs to the alkB family. In terms of assembly, monomer. Interacts with RBM33; promoting desumoylation by SENP1 and recruitment to N(6)-methyladenosine-containing mRNAs. Interacts (when acetylated by KAT8) with PSPC1; interaction facilitates recognition of N(6)-methyladenosine (m6A) mRNA. Requires Fe(2+) as cofactor. Phosphorylated at Ser-88 and Ser-326 in response to reactive oxygen species (ROS), promoting sumoylation and inactivation. In terms of processing, acetylated by KAT8 at Lys-236, promoting interaction with PSPC1, thereby facilitating recognition of N(6)-methyladenosine (m6A) mRNA by ALKBH5. Deacetylated at Lys-236 by HDAC7. Post-translationally, sumoylated at Lys-87 and Lys-322 by PIAS4 following phosphorylation at Ser-88 and Ser-326 in response to reactive oxygen species (ROS), inhibiting the RNA demethylase activity. Desumoylated by SENP1; relieving RNA demethylase inhibition, leading to N(6)-methyladenosine-containing mRNAs demethylation. Ubiquitinated at Lys-58 via 'Lys-48'-linked polyubiquitin chain, leading to its degradation by the proteasome. Deubiquitinated at Lys-58 by USP9X, promoting its stabilizazion. In terms of tissue distribution, widely expressed, with highest expression in testis. In testis, present in almost all testicular cell types except elongating and elongated spermatids (at protein level). Among spermatogenic cells, present at high level in spermatocytes; medium levels in spermatogonia and lower levels in round spermatids (at protein level).

It localises to the nucleus speckle. The enzyme catalyses an N(6)-methyladenosine in mRNA + 2-oxoglutarate + O2 = an adenosine in mRNA + formaldehyde + succinate + CO2. Its activity is regulated as follows. RNA demethylase activity is inhibited following sumoylation. Inhibition is relieved following desumoylation. Inhibited by histone demethylase inhibitor IOX1. Functionally, dioxygenase that specifically demethylates N(6)-methyladenosine (m6A) RNA, the most prevalent internal modification of messenger RNA (mRNA) in higher eukaryotes. Demethylates RNA by oxidative demethylation, which requires molecular oxygen, alpha-ketoglutarate and iron. Demethylation of m6A mRNA affects mRNA processing, translation and export. Can also demethylate N(6)-methyladenosine in single-stranded DNA (in vitro). Required for the late meiotic and haploid phases of spermatogenesis by mediating m6A demethylation in spermatocytes and round spermatids: m6A demethylation of target transcripts is required for correct splicing and the production of longer 3'-UTR mRNAs in male germ cells. Involved in paraspeckle assembly, a nuclear membraneless organelle, by undergoing liquid-liquid phase separation. Paraspeckle assembly is coupled with m6A demethylation of RNAs, such as NEAT1 non-coding RNA. Also acts as a negative regulator of T-cell development: inhibits gamma-delta T-cell proliferation via demethylation of JAG1 and NOTCH2 transcripts. Inhibits regulatory T-cell (Treg) recruitment by mediating demethylation and destabilization of CCL28 mRNAs. The chain is RNA demethylase ALKBH5 from Mus musculus (Mouse).